Reading from the N-terminus, the 432-residue chain is Adenylosuccinate synthetase (432 aa).

GTP is bound by residues 13 to 19 (GDEGKGK) and 41 to 43 (GHT). Asp-14 functions as the Proton acceptor in the catalytic mechanism. The Mg(2+) site is built by Asp-14 and Gly-41. Residues 14-17 (DEGK), 39-42 (NAGH), Thr-130, Arg-144, Gln-225, Thr-240, and Arg-304 each bind IMP. The active-site Proton donor is His-42. 300–306 (AVTGRPR) is a substrate binding site. GTP contacts are provided by residues Arg-306, 332–334 (KLD), and 415–417 (STG).

Belongs to the adenylosuccinate synthetase family. As to quaternary structure, homodimer. Mg(2+) is required as a cofactor.

It localises to the cytoplasm. It carries out the reaction IMP + L-aspartate + GTP = N(6)-(1,2-dicarboxyethyl)-AMP + GDP + phosphate + 2 H(+). Its pathway is purine metabolism; AMP biosynthesis via de novo pathway; AMP from IMP: step 1/2. Functionally, plays an important role in the de novo pathway of purine nucleotide biosynthesis. Catalyzes the first committed step in the biosynthesis of AMP from IMP. The polypeptide is Adenylosuccinate synthetase (Pasteurella multocida (strain Pm70)).